Here is a 231-residue protein sequence, read N- to C-terminus: Cytochrome c oxidase subunit 2 (231 aa).

Topologically, residues 1–30 (MNNFFQGYNLLFQHSLFASYMDWFHAFNCS) are mitochondrial intermembrane. A helical transmembrane segment spans residues 31–51 (LLLGVLVFVTLLFGYLIFSTF). Topologically, residues 52 to 64 (YFKSKKIEYQFGE) are mitochondrial matrix. A helical transmembrane segment spans residues 65–85 (LLCSIFPTIILLMQMVPSLSL). Topologically, residues 86–231 (LYYYGLMNLD…FKSWCFGTME (146 aa)) are mitochondrial intermembrane. Residues histidine 164, cysteine 199, glutamate 201, cysteine 203, histidine 207, and methionine 210 each coordinate Cu cation. Mg(2+) is bound at residue glutamate 201.

It belongs to the cytochrome c oxidase subunit 2 family. In terms of assembly, component of the cytochrome c oxidase (complex IV, CIV), a multisubunit enzyme composed of a catalytic core of 3 subunits and several supernumerary subunits. The complex exists as a monomer or a dimer and forms supercomplexes (SCs) in the inner mitochondrial membrane with ubiquinol-cytochrome c oxidoreductase (cytochrome b-c1 complex, complex III, CIII). It depends on Cu cation as a cofactor.

It is found in the mitochondrion inner membrane. It catalyses the reaction 4 Fe(II)-[cytochrome c] + O2 + 8 H(+)(in) = 4 Fe(III)-[cytochrome c] + 2 H2O + 4 H(+)(out). In terms of biological role, component of the cytochrome c oxidase, the last enzyme in the mitochondrial electron transport chain which drives oxidative phosphorylation. The respiratory chain contains 3 multisubunit complexes succinate dehydrogenase (complex II, CII), ubiquinol-cytochrome c oxidoreductase (cytochrome b-c1 complex, complex III, CIII) and cytochrome c oxidase (complex IV, CIV), that cooperate to transfer electrons derived from NADH and succinate to molecular oxygen, creating an electrochemical gradient over the inner membrane that drives transmembrane transport and the ATP synthase. Cytochrome c oxidase is the component of the respiratory chain that catalyzes the reduction of oxygen to water. Electrons originating from reduced cytochrome c in the intermembrane space (IMS) are transferred via the dinuclear copper A center (CU(A)) of subunit 2 and heme A of subunit 1 to the active site in subunit 1, a binuclear center (BNC) formed by heme A3 and copper B (CU(B)). The BNC reduces molecular oxygen to 2 water molecules using 4 electrons from cytochrome c in the IMS and 4 protons from the mitochondrial matrix. This chain is Cytochrome c oxidase subunit 2 (cox-2), found in Caenorhabditis briggsae.